The primary structure comprises 238 residues: Orotidine 5'-phosphate decarboxylase (238 aa).

Substrate is bound by residues D10, K32, 59-68, T122, R184, Q193, G213, and R214; that span reads DLKLHDIPNT. K61 acts as the Proton donor in catalysis.

It belongs to the OMP decarboxylase family. Type 1 subfamily. In terms of assembly, homodimer.

The enzyme catalyses orotidine 5'-phosphate + H(+) = UMP + CO2. The protein operates within pyrimidine metabolism; UMP biosynthesis via de novo pathway; UMP from orotate: step 2/2. Catalyzes the decarboxylation of orotidine 5'-monophosphate (OMP) to uridine 5'-monophosphate (UMP). The sequence is that of Orotidine 5'-phosphate decarboxylase from Bacillus cereus (strain ATCC 10987 / NRS 248).